Consider the following 112-residue polypeptide: T cell receptor alpha variable 12-1 (112 aa).

A signal peptide spans 1–20; that stretch reads MISLRVLLVILWLQLSWVWS. The Ig-like domain occupies 23–112; it reads KEVEQDPGPF…DSATYLCVVN (90 aa). Asparagine 43 is a glycosylation site (N-linked (GlcNAc...) asparagine). A disulfide bridge connects residues cysteine 44 and cysteine 109.

In terms of assembly, alpha-beta TR is a heterodimer composed of an alpha and beta chain; disulfide-linked. The alpha-beta TR is associated with the transmembrane signaling CD3 coreceptor proteins to form the TR-CD3 (TcR or TCR). The assembly of alpha-beta TR heterodimers with CD3 occurs in the endoplasmic reticulum where a single alpha-beta TR heterodimer associates with one CD3D-CD3E heterodimer, one CD3G-CD3E heterodimer and one CD247 homodimer forming a stable octameric structure. CD3D-CD3E and CD3G-CD3E heterodimers preferentially associate with TR alpha and TR beta chains, respectively. The association of the CD247 homodimer is the last step of TcR assembly in the endoplasmic reticulum and is required for transport to the cell surface.

It localises to the cell membrane. Its function is as follows. V region of the variable domain of T cell receptor (TR) alpha chain that participates in the antigen recognition. Alpha-beta T cell receptors are antigen specific receptors which are essential to the immune response and are present on the cell surface of T lymphocytes. Recognize peptide-major histocompatibility (MH) (pMH) complexes that are displayed by antigen presenting cells (APC), a prerequisite for efficient T cell adaptive immunity against pathogens. Binding of alpha-beta TR to pMH complex initiates TR-CD3 clustering on the cell surface and intracellular activation of LCK that phosphorylates the ITAM motifs of CD3G, CD3D, CD3E and CD247 enabling the recruitment of ZAP70. In turn ZAP70 phosphorylates LAT, which recruits numerous signaling molecules to form the LAT signalosome. The LAT signalosome propagates signal branching to three major signaling pathways, the calcium, the mitogen-activated protein kinase (MAPK) kinase and the nuclear factor NF-kappa-B (NF-kB) pathways, leading to the mobilization of transcription factors that are critical for gene expression and essential for T cell growth and differentiation. The T cell repertoire is generated in the thymus, by V-(D)-J rearrangement. This repertoire is then shaped by intrathymic selection events to generate a peripheral T cell pool of self-MH restricted, non-autoaggressive T cells. Post-thymic interaction of alpha-beta TR with the pMH complexes shapes TR structural and functional avidity. The chain is T cell receptor alpha variable 12-1 from Homo sapiens (Human).